A 510-amino-acid chain; its full sequence is 2,3-bisphosphoglycerate-independent phosphoglycerate mutase (510 aa).

Positions 13 and 63 each coordinate Mn(2+). Ser63 acts as the Phosphoserine intermediate in catalysis. Substrate-binding positions include His124, 154 to 155, Arg186, Arg192, 262 to 265, and Lys334; these read RD and RADR. The Mn(2+) site is built by Asp401, His405, Asp442, His443, and His461.

It belongs to the BPG-independent phosphoglycerate mutase family. In terms of assembly, monomer. Mn(2+) is required as a cofactor.

It catalyses the reaction (2R)-2-phosphoglycerate = (2R)-3-phosphoglycerate. The protein operates within carbohydrate degradation; glycolysis; pyruvate from D-glyceraldehyde 3-phosphate: step 3/5. Catalyzes the interconversion of 2-phosphoglycerate and 3-phosphoglycerate. The protein is 2,3-bisphosphoglycerate-independent phosphoglycerate mutase of Vibrio vulnificus (strain YJ016).